A 994-amino-acid chain; its full sequence is UPF0182 protein Strop_3729 (994 aa).

Transmembrane regions (helical) follow at residues 18 to 38 (IGVLVGVFVLFTLLGWGVQAW), 61 to 81 (LLLFVTVGLAMAVIVGGNLWL), 110 to 130 (IGLWFATVSVVVGLFAGLSAQ), 174 to 194 (FTAVVLALLGALAVHYVFGGI), 209 to 229 (AHLSTLVAVFVLLKAVAYVLD), 260 to 280 (ILAYISVVVAIAVLVFSNAWM), and 283 to 303 (LVWPGISLALLGVSAVAIGGI). 2 disordered regions span residues 891–934 (GEQA…AEAA) and 970–994 (FEQAAASTPAATPTAAPTGSPSPGG). The span at 897–926 (PSPPPSDDETPPSPTPTPTPTTPSVTPPPL) shows a compositional bias: pro residues.

It belongs to the UPF0182 family.

It is found in the cell membrane. The sequence is that of UPF0182 protein Strop_3729 from Salinispora tropica (strain ATCC BAA-916 / DSM 44818 / JCM 13857 / NBRC 105044 / CNB-440).